Reading from the N-terminus, the 142-residue chain is Glia maturation factor beta (142 aa).

At serine 2 the chain carries N-acetylserine. One can recognise an ADF-H domain in the interval 4–139; that stretch reads SLVVCDVAED…TEEWLREKLG (136 aa).

This sequence belongs to the actin-binding proteins ADF family. GMF subfamily. In terms of processing, phosphorylated; stimulated by phorbol ester.

Its function is as follows. This protein causes differentiation of brain cells, stimulation of neural regeneration, and inhibition of proliferation of tumor cells. In Homo sapiens (Human), this protein is Glia maturation factor beta (GMFB).